Consider the following 335-residue polypeptide: MQSTHSIAELVTRQKRHDYRFLAILTCLFLLVFFLSLCAGENWIWPNKWFSETGQLFVWQLRFPRVLAVVAVGASLTVAGAVMQALFENPLAEPGLLGVSNGAGVVVVFLVLMFHGIAPFWLLSIGAVLGALTVTMILLTFSRNRYLNNARLLLVGVAFGVASGALMTWMVYFSTSLDLRQLMYWMMGSFSGIDWRHQWLVVALFPLIIWLSRQGKVLNFLSLGETQAQQLGISLYYWRNLFVFAVGLLVGLSVALAGTISFIGLVIPHILRLCGLTDYKTLLPACVLSGGYGLLLADLLSRLSLNNAEVPIGVVTATLGAPVFIWLLLRVRDWS.

The next 9 membrane-spanning stretches (helical) occupy residues 21–43 (FLAILTCLFLLVFFLSLCAGENW), 63–82 (FPRVLAVVAVGASLTVAGAV), 95–114 (GLLGVSNGAGVVVVFLVLMF), 119–141 (PFWLLSIGAVLGALTVTMILLTF), 153–175 (LLVGVAFGVASGALMTWMVYFST), 195–212 (WRHQWLVVALFPLIIWLS), 244–266 (FAVGLLVGLSVALAGTISFIGLV), 281–303 (TLLPACVLSGGYGLLLADLLSRL), and 310–329 (VPIGVVTATLGAPVFIWLLL).

This sequence belongs to the binding-protein-dependent transport system permease family. FecCD subfamily. In terms of assembly, the complex is composed of two ATP-binding proteins (BtuD), two transmembrane proteins (BtuC) and a solute-binding protein (BtuF).

It is found in the cell inner membrane. In terms of biological role, part of the ABC transporter complex BtuCDF involved in vitamin B12 import. Involved in the translocation of the substrate across the membrane. The chain is Vitamin B12 import system permease protein BtuC from Photorhabdus laumondii subsp. laumondii (strain DSM 15139 / CIP 105565 / TT01) (Photorhabdus luminescens subsp. laumondii).